Reading from the N-terminus, the 1872-residue chain is Plexin-A3 (1872 aa).

Positions M1–G19 are cleaved as a signal peptide. Residues S20 to V489 form the Sema domain. Residues S20 to P1220 are Extracellular-facing. The N-linked (GlcNAc...) asparagine glycan is linked to N60. Intrachain disulfides connect C78–C87, C113–C121, C267–C388, C283–C339, C357–C376, C492–C509, C498–C540, C501–C518, and C512–C524. N-linked (GlcNAc...) asparagine glycosylation occurs at N549. C575 and C595 are joined by a disulfide. 4 IPT/TIG domains span residues P841–V934, P936–T1021, P1024–Y1123, and P1126–T1212. N1163 carries N-linked (GlcNAc...) asparagine glycosylation. A helical transmembrane segment spans residues A1221–V1241. Residues L1240–Q1294 are a coiled coil. The Cytoplasmic portion of the chain corresponds to A1242–S1872. The residue at position 1597 (S1597) is a Phosphoserine.

The protein belongs to the plexin family. Detected in embryonic hindbrain, spinal cord, dorsal root ganglion, trigeminal ganglion and superior cervical ganglion. In newborns, detected throughout all layers of the hippocampus.

Its subcellular location is the cell membrane. In terms of biological role, coreceptor for SEMA3A and SEMA3F. Necessary for signaling by class 3 semaphorins and subsequent remodeling of the cytoskeleton. Plays a role in axon guidance in the developing nervous system. Regulates the migration of sympathetic neurons, but not of neural crest precursors. Required for normal dendrite spine morphology in pyramidal neurons. May play a role in regulating semaphorin-mediated programmed cell death in the developing nervous system. Class 3 semaphorins bind to a complex composed of a neuropilin and a plexin. The plexin modulates the affinity of the complex for specific semaphorins, and its cytoplasmic domain is required for the activation of down-stream signaling events in the cytoplasm. This Mus musculus (Mouse) protein is Plexin-A3 (Plxna3).